Consider the following 90-residue polypeptide: Small ribosomal subunit protein bS20 (90 aa).

The protein belongs to the bacterial ribosomal protein bS20 family.

Its function is as follows. Binds directly to 16S ribosomal RNA. The polypeptide is Small ribosomal subunit protein bS20 (Francisella philomiragia subsp. philomiragia (strain ATCC 25017 / CCUG 19701 / FSC 153 / O#319-036)).